The chain runs to 139 residues: Plastocyanin (139 aa).

An N-terminal signal peptide occupies residues 1–34 (MKLIAQISRSLSLALFALVLMVGSFVAVMSPAAA). The 105-residue stretch at 35–139 (ETFTVKMGAD…GMVGKITVEG (105 aa)) folds into the Plastocyanin-like domain. 4 residues coordinate Cu cation: H73, C123, H126, and M131.

It belongs to the plastocyanin family. Cu(2+) is required as a cofactor.

Its subcellular location is the cellular thylakoid membrane. Participates in electron transfer between P700 and the cytochrome b6-f complex in photosystem I. This Leptolyngbya laminosa (Phormidium laminosum) protein is Plastocyanin (petE).